The primary structure comprises 522 residues: Peptide chain release factor 3 (522 aa).

The tr-type G domain maps to 9–276 (KKRRTFAIIS…SFVNLAPAPQ (268 aa)). Residues 18–25 (SHPDAGKT), 86–90 (DTPGH), and 140–143 (NKLD) contribute to the GTP site.

Belongs to the TRAFAC class translation factor GTPase superfamily. Classic translation factor GTPase family. PrfC subfamily.

It localises to the cytoplasm. In terms of biological role, increases the formation of ribosomal termination complexes and stimulates activities of RF-1 and RF-2. It binds guanine nucleotides and has strong preference for UGA stop codons. It may interact directly with the ribosome. The stimulation of RF-1 and RF-2 is significantly reduced by GTP and GDP, but not by GMP. This chain is Peptide chain release factor 3, found in Lactobacillus johnsonii (strain CNCM I-12250 / La1 / NCC 533).